Here is a 264-residue protein sequence, read N- to C-terminus: 3-methyl-2-oxobutanoate hydroxymethyltransferase (264 aa).

Mg(2+)-binding residues include Asp45 and Asp84. 3-methyl-2-oxobutanoate is bound by residues 45 to 46 (DS), Asp84, and Lys112. Position 114 (Glu114) interacts with Mg(2+). Glu181 serves as the catalytic Proton acceptor.

It belongs to the PanB family. In terms of assembly, homodecamer; pentamer of dimers. Mg(2+) serves as cofactor.

The protein resides in the cytoplasm. It catalyses the reaction 3-methyl-2-oxobutanoate + (6R)-5,10-methylene-5,6,7,8-tetrahydrofolate + H2O = 2-dehydropantoate + (6S)-5,6,7,8-tetrahydrofolate. The protein operates within cofactor biosynthesis; (R)-pantothenate biosynthesis; (R)-pantoate from 3-methyl-2-oxobutanoate: step 1/2. In terms of biological role, catalyzes the reversible reaction in which hydroxymethyl group from 5,10-methylenetetrahydrofolate is transferred onto alpha-ketoisovalerate to form ketopantoate. The polypeptide is 3-methyl-2-oxobutanoate hydroxymethyltransferase (Escherichia coli O1:K1 / APEC).